We begin with the raw amino-acid sequence, 293 residues long: RNA-binding Raly-like protein (293 aa).

The region spanning 21–92 is the RRM domain; it reads SRVFIGNLNT…QPLDINMAGE (72 aa). 2 disordered regions span residues 159–195 and 245–293; these read PRAAVTTTRRGKGVFSMKGGSRSAVSGSSSSGSKLKS and QDEC…LQIK. Residues 176–192 are compositionally biased toward low complexity; that stretch reads KGGSRSAVSGSSSSGSK. Residues 192 to 254 adopt a coiled-coil conformation; that stretch reads KLKSDELQTI…QDECVSENAD (63 aa). Residues 259 to 284 show a composition bias toward acidic residues; that stretch reads EPAEGAPDADGEELTDGVEEDFDEDG.

This sequence belongs to the RRM HNRPC family. RALY subfamily.

The sequence is that of RNA-binding Raly-like protein (RALYL) from Bos taurus (Bovine).